Here is a 502-residue protein sequence, read N- to C-terminus: Chlorophyllide reductase 52.5 kDa chain (502 aa).

Helical transmembrane passes span 70 to 87 (VGTI…LSFV), 131 to 147 (AIVV…GVPL), and 221 to 238 (VMIG…GPVV).

This sequence belongs to the BchN/ChlN family. As to quaternary structure, chlorophyllide reductase is composed of three subunits; BchX, BchY and BchZ. Forms a heterodimer of one BchY and one BchZ subunit.

It is found in the cell membrane. It carries out the reaction 3-deacetyl-3-vinylbacteriochlorophyllide a + 2 oxidized [2Fe-2S]-[ferredoxin] + ADP + phosphate = chlorophyllide a + 2 reduced [2Fe-2S]-[ferredoxin] + ATP + H2O + H(+). The catalysed reaction is bacteriochlorophyllide a + 2 oxidized [2Fe-2S]-[ferredoxin] + ADP + phosphate = 3-acetyl-3-devinylchlorophyllide a + 2 reduced [2Fe-2S]-[ferredoxin] + ATP + H2O + H(+). It catalyses the reaction 3-deacetyl-3-(1-hydroxyethyl)bacteriochlorophyllide a + 2 oxidized [2Fe-2S]-[ferredoxin] + ADP + phosphate = 3-devinyl-3-(1-hydroxyethyl)chlorophyllide a + 2 reduced [2Fe-2S]-[ferredoxin] + ATP + H2O + H(+). The protein operates within porphyrin-containing compound metabolism; bacteriochlorophyll biosynthesis (light-independent). Its function is as follows. Converts chlorophylls (Chl) into bacteriochlorophylls (BChl) by reducing ring B of the tetrapyrrole. This is Chlorophyllide reductase 52.5 kDa chain (bchY) from Cereibacter sphaeroides (strain ATCC 17023 / DSM 158 / JCM 6121 / CCUG 31486 / LMG 2827 / NBRC 12203 / NCIMB 8253 / ATH 2.4.1.) (Rhodobacter sphaeroides).